The sequence spans 195 residues: Probable nicotinate-nucleotide adenylyltransferase (195 aa).

This sequence belongs to the NadD family.

The catalysed reaction is nicotinate beta-D-ribonucleotide + ATP + H(+) = deamido-NAD(+) + diphosphate. Its pathway is cofactor biosynthesis; NAD(+) biosynthesis; deamido-NAD(+) from nicotinate D-ribonucleotide: step 1/1. Catalyzes the reversible adenylation of nicotinate mononucleotide (NaMN) to nicotinic acid adenine dinucleotide (NaAD). This chain is Probable nicotinate-nucleotide adenylyltransferase, found in Gluconobacter oxydans (strain 621H) (Gluconobacter suboxydans).